We begin with the raw amino-acid sequence, 321 residues long: Thylakoid-associated protein sll1697 (321 aa).

It localises to the cellular thylakoid membrane. The sequence is that of Thylakoid-associated protein sll1697 from Synechocystis sp. (strain ATCC 27184 / PCC 6803 / Kazusa).